The chain runs to 336 residues: MITDTIVELEGVNGERFNLTTGDQGVFLATDVEGCFYDPPVKVVYEEPGNYPGARYLGHRVLKRDIVFGVQILNDAKQGPRSWLSRDSVWRKAWAFNRVCKLYVTTPDSGTRYLYLALFESPKVEMKTDPRGNTINLTVMSCISYDPFWYEDDRVFSVKTKTDTRFDPNFWTPPWPWEELPKETLRIKVGREQGGLNPTDQYIAPKWTVPGSTEKIPDFPWPFPPGVEIPWETAPFTQFVIPDYSFEDEEFANRRLKTPGLIYGENCIIDTDRREEQISSESGSPVWARMNGVRFRNMIPPYTEEREFVIDASGCAPGQVVTLRLPRPWSRCWGLE.

This is Minor tail protein Gp27 (27) from Mycobacterium (Mycobacteriophage D29).